Reading from the N-terminus, the 492-residue chain is Phosphatidylinositol-glycan biosynthesis class W protein (492 aa).

The next 5 helical transmembrane spans lie at phenylalanine 26–phenylalanine 46, phenylalanine 59–leucine 79, phenylalanine 82–valine 102, tyrosine 127–phenylalanine 147, and threonine 156–valine 176. The disordered stretch occupies residues isoleucine 185–alanine 216. The N-linked (GlcNAc...) asparagine glycan is linked to asparagine 204. The span at lysine 205 to alanine 216 shows a compositional bias: low complexity. The chain crosses the membrane as a helical span at residues tyrosine 264–leucine 284. The N-linked (GlcNAc...) asparagine glycan is linked to asparagine 289. 4 helical membrane-spanning segments follow: residues isoleucine 290–glycine 310, isoleucine 331–leucine 351, phenylalanine 364–isoleucine 384, and valine 399–isoleucine 419. N-linked (GlcNAc...) asparagine glycosylation occurs at asparagine 424. The next 2 membrane-spanning stretches (helical) occupy residues leucine 437 to isoleucine 457 and serine 464 to tyrosine 484.

The protein belongs to the PIGW family.

Its subcellular location is the endoplasmic reticulum membrane. The protein operates within glycolipid biosynthesis; glycosylphosphatidylinositol-anchor biosynthesis. In terms of biological role, probable acetyltransferase, which acetylates the inositol ring of phosphatidylinositol during biosynthesis of GPI-anchor. This Dictyostelium discoideum (Social amoeba) protein is Phosphatidylinositol-glycan biosynthesis class W protein.